The following is a 649-amino-acid chain: ABC transporter G family member 5 (649 aa).

In terms of domain architecture, ABC transporter spans 42 to 284 (VKTEEESLKL…LRSNGLHPPL (243 aa)). 80 to 87 (GPSGAGKS) provides a ligand contact to ATP. The interval 308–336 (SRRAAHVLTPQTTLQEKRSEDSQGESKSG) is disordered. An ABC transmembrane type-2 domain is found at 371–581 (EETMILTHRF…PFEGFLINEF (211 aa)). Transmembrane regions (helical) follow at residues 390–410 (LFAC…LIFH), 425–445 (LFAF…PIFL), 474–494 (LPFL…LVGL), 506–526 (LLIW…SALV), 529–549 (FIVG…FSGY), and 617–637 (VVIM…ILRC).

The protein belongs to the ABC transporter superfamily. ABCG family. Eye pigment precursor importer (TC 3.A.1.204) subfamily.

It localises to the membrane. This chain is ABC transporter G family member 5 (ABCG5), found in Arabidopsis thaliana (Mouse-ear cress).